Consider the following 178-residue polypeptide: MSGGKYVDSEGHLYTVPIREQGNIYKPNNKAMADELSEKQVYDAHTKEIDLVNRDPKHLNDDVVKIDFEDVIAEPEGTHSFDGIWKASFTTFTVTKYWFYRLLSALFGIPMALVWGIYFAILSFLHIWAVVPCIKSFLIEIQCISRVYSIYVHTVCDPLFEAVGKIFSNVRINLQKEI.

Position 2 is an N-acetylserine (serine 2). Residue serine 2 is modified to Phosphoserine. Residues 2 to 94 (SGGKYVDSEG…WKASFTTFTV (93 aa)) form a required for homooligomerization region. The Cytoplasmic segment spans residues 2–104 (SGGKYVDSEG…TKYWFYRLLS (103 aa)). Lysine 5 is modified (N6-acetyllysine; alternate). A Glycyl lysine isopeptide (Lys-Gly) (interchain with G-Cter in ubiquitin); alternate cross-link involves residue lysine 5. Tyrosine 6 bears the Phosphotyrosine mark. A Phosphoserine modification is found at serine 9. Residue tyrosine 14 is modified to Phosphotyrosine; by ABL1. Tyrosine 25 is modified (phosphotyrosine). Glycyl lysine isopeptide (Lys-Gly) (interchain with G-Cter in ubiquitin) cross-links involve residues lysine 26 and lysine 30. Serine 37 bears the Phosphoserine mark. Residues lysine 39, lysine 47, and lysine 57 each participate in a glycyl lysine isopeptide (Lys-Gly) (interchain with G-Cter in ubiquitin) cross-link. Residues 82-94 (DGIWKASFTTFTV) are interaction with CAVIN3. An intramembrane region (helical) is located at residues 105–125 (ALFGIPMALVWGIYFAILSFL). Residues 126–178 (HIWAVVPCIKSFLIEIQCISRVYSIYVHTVCDPLFEAVGKIFSNVRINLQKEI) are Cytoplasmic-facing. Positions 131–142 (VPCIKSFLIEIQ) are interacts with SPRY1, SPRY2, SPRY3 and SPRY4. S-palmitoyl cysteine attachment occurs at residues cysteine 133, cysteine 143, and cysteine 156. The interacts with SPRY1, SPRY2, and SPRY4 stretch occupies residues 149 to 160 (SIYVHTVCDPLF). The interacts with SPRY1, SPRY2, SPRY3 and SPRY4 stretch occupies residues 167–178 (FSNVRINLQKEI).

This sequence belongs to the caveolin family. Homooligomer. Interacts with GLIPR2. Interacts with NOSTRIN. Interacts with SNAP25 and STX1A. Interacts (via the N-terminus) with DPP4; the interaction is direct. Interacts with CTNNB1, CDH1 and JUP. Interacts with PACSIN2; this interaction induces membrane tubulation. Interacts with SLC7A9. Interacts with BMX and BTK. Interacts with TGFBR1. Interacts with CAVIN3 (via leucine-zipper domain) in a cholesterol-sensitive manner. Interacts with CAVIN1. Interacts with EHD2 in a cholesterol-dependent manner. Forms a ternary complex with UBXN6 and VCP; mediates CAV1 targeting to lysosomes for degradation. Interacts with ABCG1; this interaction regulates ABCG1-mediated cholesterol efflux. Interacts with NEU3; this interaction enhances NEU3 sialidase activity within caveola. Interacts (via C-terminus) with SPRY1, SPRY2 (via C-terminus), SPRY3, and SPRY4. Interacts with IGFBP5; this interaction allows trafficking of IGFBP5 from the plasma membrane to the nucleus. Post-translationally, phosphorylated at Tyr-14 by ABL1 in response to oxidative stress. Ubiquitinated. Undergo monoubiquitination and multi- and/or polyubiquitination. Monoubiquitination of N-terminal lysines promotes integration in a ternary complex with UBXN6 and VCP which promotes oligomeric CAV1 targeting to lysosomes for degradation. Ubiquitinated by ZNRF1; leading to degradation and modulation of the TLR4-mediated immune response.

It is found in the golgi apparatus membrane. It localises to the cell membrane. The protein resides in the membrane. Its subcellular location is the caveola. The protein localises to the membrane raft. Functionally, may act as a scaffolding protein within caveolar membranes. Forms a stable heterooligomeric complex with CAV2 that targets to lipid rafts and drives caveolae formation. Mediates the recruitment of CAVIN proteins (CAVIN1/2/3/4) to the caveolae. Interacts directly with G-protein alpha subunits and can functionally regulate their activity. Involved in the costimulatory signal essential for T-cell receptor (TCR)-mediated T-cell activation. Its binding to DPP4 induces T-cell proliferation and NF-kappa-B activation in a T-cell receptor/CD3-dependent manner. Recruits CTNNB1 to caveolar membranes and may regulate CTNNB1-mediated signaling through the Wnt pathway. Negatively regulates TGFB1-mediated activation of SMAD2/3 by mediating the internalization of TGFBR1 from membrane rafts leading to its subsequent degradation. Binds 20(S)-hydroxycholesterol (20(S)-OHC). This is Caveolin-1 (CAV1) from Papio anubis (Olive baboon).